Consider the following 874-residue polypeptide: Alanine--tRNA ligase (874 aa).

Zn(2+) is bound by residues H562, H566, C664, and H668.

Belongs to the class-II aminoacyl-tRNA synthetase family. The cofactor is Zn(2+).

The protein resides in the cytoplasm. The enzyme catalyses tRNA(Ala) + L-alanine + ATP = L-alanyl-tRNA(Ala) + AMP + diphosphate. In terms of biological role, catalyzes the attachment of alanine to tRNA(Ala) in a two-step reaction: alanine is first activated by ATP to form Ala-AMP and then transferred to the acceptor end of tRNA(Ala). Also edits incorrectly charged Ser-tRNA(Ala) and Gly-tRNA(Ala) via its editing domain. The sequence is that of Alanine--tRNA ligase from Shewanella sp. (strain MR-7).